We begin with the raw amino-acid sequence, 84 residues long: MLYKDIKNKSTTELNDLIVELKAELFLLRFKNKTSQQEQTHKIQVVRKDVAKVLTALKEKQILGEKELINKIDKKEVKKNARKN.

The protein belongs to the universal ribosomal protein uL29 family.

The chain is Large ribosomal subunit protein uL29 from Mycoplasma mobile (strain ATCC 43663 / 163K / NCTC 11711) (Mesomycoplasma mobile).